The sequence spans 110 residues: Endoribonuclease SymE (110 aa).

The SpoVT-AbrB domain occupies 29 to 74 (SSYPEYTRIPAITLKGQWLEDAGFTTGTQVDVRVMNGCIVLTAQQP).

This sequence belongs to the SymE family.

It localises to the cytoplasm. Involved in the degradation and recycling of damaged RNA. It is itself a target for degradation by the ATP-dependent protease Lon. The polypeptide is Endoribonuclease SymE (Salmonella choleraesuis (strain SC-B67)).